Here is a 341-residue protein sequence, read N- to C-terminus: DNA-directed RNA polymerase subunit alpha (341 aa).

An alpha N-terminal domain (alpha-NTD) region spans residues 1-233 (MLKDGTSVSN…DLLSPFLHTK (233 aa)). Residues 262 to 341 (SEGDFFKNTF…NEKPRVVGDE (80 aa)) form an alpha C-terminal domain (alpha-CTD) region.

The protein belongs to the RNA polymerase alpha chain family. As to quaternary structure, in plastids the minimal PEP RNA polymerase catalytic core is composed of four subunits: alpha, beta, beta', and beta''. When a (nuclear-encoded) sigma factor is associated with the core the holoenzyme is formed, which can initiate transcription.

It localises to the plastid. It is found in the chloroplast. The enzyme catalyses RNA(n) + a ribonucleoside 5'-triphosphate = RNA(n+1) + diphosphate. Its function is as follows. DNA-dependent RNA polymerase catalyzes the transcription of DNA into RNA using the four ribonucleoside triphosphates as substrates. The protein is DNA-directed RNA polymerase subunit alpha of Marsilea quadrifolia (European water clover).